The chain runs to 142 residues: Required for drug-induced death protein 1 (142 aa).

Disordered stretches follow at residues 1 to 32 (MTVGARLRSKAESSLLRRGPRGRGRTEGDEEA) and 46 to 66 (EAAAESGTSAADERGPGTRGA). A helical membrane pass occupies residues 116-138 (VVIGLQGFAAAYSAPFAVATSVV).

Its subcellular location is the membrane. Functionally, regulates drug efflux through modulation of ABCB1 localization and activity. The polypeptide is Required for drug-induced death protein 1 (Homo sapiens (Human)).